The following is a 363-amino-acid chain: Phosphoserine aminotransferase (363 aa).

Residue Arg42 participates in L-glutamate binding. Pyridoxal 5'-phosphate is bound by residues 76–77 (GR), Trp102, Thr156, Asp175, and Gln198. Lys199 is subject to N6-(pyridoxal phosphate)lysine. 240-241 (NT) lines the pyridoxal 5'-phosphate pocket.

It belongs to the class-V pyridoxal-phosphate-dependent aminotransferase family. SerC subfamily. Homodimer. Pyridoxal 5'-phosphate is required as a cofactor.

It is found in the cytoplasm. It carries out the reaction O-phospho-L-serine + 2-oxoglutarate = 3-phosphooxypyruvate + L-glutamate. It catalyses the reaction 4-(phosphooxy)-L-threonine + 2-oxoglutarate = (R)-3-hydroxy-2-oxo-4-phosphooxybutanoate + L-glutamate. It functions in the pathway amino-acid biosynthesis; L-serine biosynthesis; L-serine from 3-phospho-D-glycerate: step 2/3. The protein operates within cofactor biosynthesis; pyridoxine 5'-phosphate biosynthesis; pyridoxine 5'-phosphate from D-erythrose 4-phosphate: step 3/5. Its function is as follows. Catalyzes the reversible conversion of 3-phosphohydroxypyruvate to phosphoserine and of 3-hydroxy-2-oxo-4-phosphonooxybutanoate to phosphohydroxythreonine. The chain is Phosphoserine aminotransferase from Shewanella sp. (strain MR-4).